Reading from the N-terminus, the 527-residue chain is Chorismate synthase (527 aa).

Active-site residues include His-17, His-104, and Asp-485.

This sequence belongs to the chorismate synthase family.

It is found in the cytoplasm. Its subcellular location is the cytosol. The enzyme catalyses 5-O-(1-carboxyvinyl)-3-phosphoshikimate = chorismate + phosphate. The catalysed reaction is FMNH2 + NADP(+) = FMN + NADPH + 2 H(+). It participates in metabolic intermediate biosynthesis; chorismate biosynthesis; chorismate from D-erythrose 4-phosphate and phosphoenolpyruvate: step 7/7. Functionally, bifunctional chorismate synthase and flavin reductase. Catalyzes the conversion of 5-enolpyruvylshikimate 3-phosphate (EPSP) to form chorismate. Acts also as a flavin reductase (FR) able to generate reduced flavin mononucleotide in the presence of NADPH. The chain is Chorismate synthase from Plasmodium falciparum (isolate 3D7).